A 152-amino-acid chain; its full sequence is Transcriptional regulator MraZ (152 aa).

SpoVT-AbrB domains are found at residues 5–52 (ANAI…PLNE) and 81–124 (ATES…DEDM).

Belongs to the MraZ family. Forms oligomers.

It localises to the cytoplasm. The protein localises to the nucleoid. This Psychromonas ingrahamii (strain DSM 17664 / CCUG 51855 / 37) protein is Transcriptional regulator MraZ.